Reading from the N-terminus, the 191-residue chain is Methylated-DNA--protein-cysteine methyltransferase (191 aa).

DNA-binding residues include Tyr120 and Arg134. The Nucleophile; methyl group acceptor role is filled by Cys151.

The protein belongs to the MGMT family.

Its subcellular location is the nucleus. It catalyses the reaction a 6-O-methyl-2'-deoxyguanosine in DNA + L-cysteinyl-[protein] = S-methyl-L-cysteinyl-[protein] + a 2'-deoxyguanosine in DNA. It carries out the reaction a 4-O-methyl-thymidine in DNA + L-cysteinyl-[protein] = a thymidine in DNA + S-methyl-L-cysteinyl-[protein]. Involved in the cellular defense against the biological effects of O6-methylguanine (O6-MeG) and O4-methylthymine (O4-MeT) in DNA. Repairs the methylated nucleobase in DNA by stoichiometrically transferring the methyl group to a cysteine residue in the enzyme. This is a suicide reaction: the enzyme is irreversibly inactivated. The chain is Methylated-DNA--protein-cysteine methyltransferase (MGT1) from Debaryomyces hansenii (strain ATCC 36239 / CBS 767 / BCRC 21394 / JCM 1990 / NBRC 0083 / IGC 2968) (Yeast).